A 294-amino-acid polypeptide reads, in one-letter code: Phosphatidylglycerol--prolipoprotein diacylglyceryl transferase (294 aa).

Helical transmembrane passes span 21–41, 60–80, 96–116, 124–144, 199–219, 226–246, and 259–279; these read VSLHWYGMMYLIGFVFALWLA, LLYVGFVGVFIGGRLGYVLFY, WDGGMSFHGGLIGVICAMIWF, FFQVADFVAPLIPFGLGLGRI, SQLYEMFLEGVVLFIILNIFV, GSVSGLFLIGYGAFRIIVEFF, and ISMGQILSIPMIILGIIFMVW. Residue Arg-143 participates in a 1,2-diacyl-sn-glycero-3-phospho-(1'-sn-glycerol) binding.

The protein belongs to the Lgt family.

The protein localises to the cell inner membrane. It catalyses the reaction L-cysteinyl-[prolipoprotein] + a 1,2-diacyl-sn-glycero-3-phospho-(1'-sn-glycerol) = an S-1,2-diacyl-sn-glyceryl-L-cysteinyl-[prolipoprotein] + sn-glycerol 1-phosphate + H(+). It participates in protein modification; lipoprotein biosynthesis (diacylglyceryl transfer). Catalyzes the transfer of the diacylglyceryl group from phosphatidylglycerol to the sulfhydryl group of the N-terminal cysteine of a prolipoprotein, the first step in the formation of mature lipoproteins. In Proteus mirabilis (strain HI4320), this protein is Phosphatidylglycerol--prolipoprotein diacylglyceryl transferase.